Consider the following 346-residue polypeptide: NADH-ubiquinone oxidoreductase chain 2 (346 aa).

Helical transmembrane passes span 25–45, 56–76, 94–114, 122–142, 148–168, 178–198, 200–220, 240–260, 278–298, and 325–345; these read NLLL…PLLA, ATKY…VIIL, LLNM…FHYW, IPLH…LSIL, LLNP…GAWG, IMAY…PYNP, LTLL…ITLM, ILTM…LTGF, LSTL…RLIY, and FILP…SQLI.

Belongs to the complex I subunit 2 family. As to quaternary structure, core subunit of respiratory chain NADH dehydrogenase (Complex I) which is composed of 45 different subunits. Interacts with TMEM242.

The protein resides in the mitochondrion inner membrane. It carries out the reaction a ubiquinone + NADH + 5 H(+)(in) = a ubiquinol + NAD(+) + 4 H(+)(out). Its function is as follows. Core subunit of the mitochondrial membrane respiratory chain NADH dehydrogenase (Complex I) which catalyzes electron transfer from NADH through the respiratory chain, using ubiquinone as an electron acceptor. Essential for the catalytic activity and assembly of complex I. In Rattus norvegicus (Rat), this protein is NADH-ubiquinone oxidoreductase chain 2.